A 284-amino-acid chain; its full sequence is 2-dehydro-3-deoxyphosphooctonate aldolase (284 aa).

It belongs to the KdsA family.

Its subcellular location is the cytoplasm. It carries out the reaction D-arabinose 5-phosphate + phosphoenolpyruvate + H2O = 3-deoxy-alpha-D-manno-2-octulosonate-8-phosphate + phosphate. It functions in the pathway carbohydrate biosynthesis; 3-deoxy-D-manno-octulosonate biosynthesis; 3-deoxy-D-manno-octulosonate from D-ribulose 5-phosphate: step 2/3. Its pathway is bacterial outer membrane biogenesis; lipopolysaccharide biosynthesis. The polypeptide is 2-dehydro-3-deoxyphosphooctonate aldolase (Pectobacterium atrosepticum (strain SCRI 1043 / ATCC BAA-672) (Erwinia carotovora subsp. atroseptica)).